The sequence spans 183 residues: Triggering receptor expressed on myeloid cells 3 (183 aa).

Residues 1–19 form the signal peptide; that stretch reads MSPLLLWLGLMLCVSGLQA. At 20-138 the chain is on the extracellular side; it reads GDEEEHKCFL…AWCQGKPVMV (119 aa). The Ig-like V-type domain maps to 30–128; that stretch reads EGENLTLTCP…VIILRQRIRL (99 aa). Asn33 carries an N-linked (GlcNAc...) asparagine glycan. A disulfide bridge links Cys38 with Cys110. A helical membrane pass occupies residues 139 to 159; the sequence is IVLTCGFILNKGLVFSVLFVF. Residues 160–183 lie on the Cytoplasmic side of the membrane; it reads LCKAGPKVLQPSKTSKVQGVSEKQ.

As to quaternary structure, interacts with TYROBP/DAP12. In terms of tissue distribution, expressed in macrophages and in T-cells.

It localises to the cell membrane. Its function is as follows. Forms a receptor signaling complex with TYROBP/DAP12 which mediates activation of macrophages as part of the innate immune response. The chain is Triggering receptor expressed on myeloid cells 3 from Mus musculus (Mouse).